Consider the following 264-residue polypeptide: Short chain dehydrogenase CPUR_05429 (264 aa).

Residues Ile-24, Asp-70, Asn-97, and Arg-130 each coordinate NADP(+). Catalysis depends on proton donor residues Ser-146 and Ser-147. NADP(+) contacts are provided by Tyr-161, Lys-165, and Thr-196. The active-site Proton acceptor is Tyr-161. Catalysis depends on Lys-165, which acts as the Lowers pKa of active site Tyr.

The protein belongs to the short-chain dehydrogenases/reductases (SDR) family.

Its pathway is pigment biosynthesis. Short chain dehydrogenase; part of the ergochrome gene cluster responsible for the typical purple-black color of the ergot sclerotia. The ergochrome gene cluster produces several ergot pigments including the yellow ergochrome secalonic acid and its derivatives, as well as the red anthraquinones endocrocin and clavorubin. The pathway begins with the synthesis of atrochrysone thioester by the polyketide synthase (PKS) CPUR_05437. The atrochrysone carboxyl ACP thioesterase CPUR_05436 then breaks the thioester bond and releases the atrochrysone carboxylic acid from CPUR_05437. The atrochrysone carboxylic acid is then converted to atrochrysone which is further transformed into emodin anthrone. The next step is performed by the anthrone oxygenase CPUR_05434 that catalyzes the oxidation of emodinanthrone to emodin. Emodin is further modified to yield monodictyphenone via several steps involving CPUR_05427, CPUR_05428, CPUR_05429 and CPUR_05430. The short chain dehydrogenase/reductase CPUR_05418 then catalyzes the C-5 ketoreduction to give the xanthone skeleton of the monomeric units. Ergochromes formation requires further dimerization steps of different xanthone units, probably catalyzed by the cytochrome P450 monooxygenase CPUR_05419. CPUR_05425, CPUR_05426 and CPUR_05431 are unique to Claviceps, thus it is likely that they are involved in further modification of xanthone units or in their dimerization. The yellow ergochromes and the red anthraquinone pigments endocrocin and clavorubin are products from the same PKS derived precursors and the latter are likely shunt products in the pathway of xanthone biosynthesis. It is proposed that atrochrysone carboxylic acid released from the PKS CPUR_05437 can also be converted to endocrocin anthrone which is further oxidized into endocrocin by CPUR_05435. Endocrocin could be then modified to clavorubin, possibly by CPUR_05423 and CPUR_05431. Clavorubin is the principal anthraquinone metabolite produced by the cluster with a much higher yield compared to endocrocin. In Claviceps purpurea (strain 20.1) (Ergot fungus), this protein is Short chain dehydrogenase CPUR_05429.